A 103-amino-acid polypeptide reads, in one-letter code: CLAVATA3/ESR (CLE)-related protein 16 (103 aa).

The N-terminal stretch at methionine 1–tyrosine 21 is a signal peptide. The interval valine 71–asparagine 103 is disordered. Residues glutamine 76–leucine 93 show a composition bias toward basic and acidic residues. A Hydroxyproline modification is found at proline 98. Proline 98 is a glycosylation site (O-linked (Ara...) hydroxyproline).

The protein belongs to the CLV3/ESR signal peptide family. In terms of processing, the O-glycosylation (arabinosylation) of the hydroxyproline Pro-98 enhances binding affinity of the CLE16p peptide for its receptor. In terms of tissue distribution, expressed in roots, stems, apex, seedlings, leaves, flowers and siliques.

The protein resides in the secreted. The protein localises to the extracellular space. Extracellular signal peptide that regulates cell fate. Represses root apical meristem maintenance. Regulates the transition of protophloem cells from proliferation to differentiation, thus impinging on postembryonic growth capacity of the root meristem; this signaling pathway requires CRN and CLV2. This is CLAVATA3/ESR (CLE)-related protein 16 from Arabidopsis thaliana (Mouse-ear cress).